Consider the following 281-residue polypeptide: Phosphatidylglycerol--prolipoprotein diacylglyceryl transferase (281 aa).

7 helical membrane-spanning segments follow: residues 11–31 (IIFT…VISF), 57–77 (LLYS…IIFY), 89–109 (VFYI…AIIV), 121–141 (ILEI…AGRI), 194–214 (PTQL…IYFF), 222–242 (GSIS…IEFF), and 255–275 (IITM…IIMY). Position 140 (Arg140) interacts with a 1,2-diacyl-sn-glycero-3-phospho-(1'-sn-glycerol).

The protein belongs to the Lgt family.

It is found in the cell inner membrane. It catalyses the reaction L-cysteinyl-[prolipoprotein] + a 1,2-diacyl-sn-glycero-3-phospho-(1'-sn-glycerol) = an S-1,2-diacyl-sn-glyceryl-L-cysteinyl-[prolipoprotein] + sn-glycerol 1-phosphate + H(+). It participates in protein modification; lipoprotein biosynthesis (diacylglyceryl transfer). Its function is as follows. Catalyzes the transfer of the diacylglyceryl group from phosphatidylglycerol to the sulfhydryl group of the N-terminal cysteine of a prolipoprotein, the first step in the formation of mature lipoproteins. The chain is Phosphatidylglycerol--prolipoprotein diacylglyceryl transferase from Buchnera aphidicola subsp. Acyrthosiphon pisum (strain 5A).